Reading from the N-terminus, the 188-residue chain is Elongation factor P (188 aa).

Lysine 34 bears the N6-(3,6-diaminohexanoyl)-5-hydroxylysine mark.

Belongs to the elongation factor P family. Post-translationally, may be beta-lysylated on the epsilon-amino group of Lys-34 by the combined action of EpmA and EpmB, and then hydroxylated on the C5 position of the same residue by EpmC (if this protein is present). Lysylation is critical for the stimulatory effect of EF-P on peptide-bond formation. The lysylation moiety may extend toward the peptidyltransferase center and stabilize the terminal 3-CCA end of the tRNA. Hydroxylation of the C5 position on Lys-34 may allow additional potential stabilizing hydrogen-bond interactions with the P-tRNA.

The protein resides in the cytoplasm. It participates in protein biosynthesis; polypeptide chain elongation. Involved in peptide bond synthesis. Alleviates ribosome stalling that occurs when 3 or more consecutive Pro residues or the sequence PPG is present in a protein, possibly by augmenting the peptidyl transferase activity of the ribosome. Modification of Lys-34 is required for alleviation. In Xanthomonas oryzae pv. oryzae (strain MAFF 311018), this protein is Elongation factor P.